The following is a 1238-amino-acid chain: Cullin-associated NEDD8-dissociated protein 1 (1238 aa).

HEAT repeat units lie at residues 41–78, 126–167, 171–208, 210–247, and 251–292; these read TYEN…RVKD, LVIK…KYGS, GDLE…PSPD, LFNS…SSGY, and KYLP…KCQK. Residues 315–354 are disordered; it reads YSDDGEGEEDGDEEEEEMETSGDNDEEQEEEEEEEDLSDD. HEAT repeat units follow at residues 382-419, 432-469, 603-641, 646-683, 688-725, 853-890, 933-966, 967-1004, and 1008-1045; these read ELYQ…QLNK, QQVP…IIPG, EIQS…SSIN, SILP…VCPN, SLLT…NYSE, HENE…CSLQ, PFLQ…KLSM, IEPN…ENKE, and QYLA…NKPN.

Belongs to the CAND family.

Its subcellular location is the nucleus. In terms of biological role, key assembly factor of SCF (SKP1-CUL1-F-box protein) E3 ubiquitin ligase complexes that promotes the exchange of the substrate-recognition F-box subunit in SCF complexes, thereby playing a key role in the cellular repertoire of SCF complexes. Acts as a F-box protein exchange factor. This Dictyostelium discoideum (Social amoeba) protein is Cullin-associated NEDD8-dissociated protein 1 (cand1).